A 339-amino-acid chain; its full sequence is tRNA(Ile)-lysidine synthase (339 aa).

Residue 34–39 (SGGPDS) participates in ATP binding.

Belongs to the tRNA(Ile)-lysidine synthase family.

The protein localises to the cytoplasm. It catalyses the reaction cytidine(34) in tRNA(Ile2) + L-lysine + ATP = lysidine(34) in tRNA(Ile2) + AMP + diphosphate + H(+). Functionally, ligates lysine onto the cytidine present at position 34 of the AUA codon-specific tRNA(Ile) that contains the anticodon CAU, in an ATP-dependent manner. Cytidine is converted to lysidine, thus changing the amino acid specificity of the tRNA from methionine to isoleucine. This chain is tRNA(Ile)-lysidine synthase, found in Methylobacterium nodulans (strain LMG 21967 / CNCM I-2342 / ORS 2060).